The following is a 510-amino-acid chain: Histidine ammonia-lyase (510 aa).

Residues 143-145 constitute a cross-link (5-imidazolinone (Ala-Gly)); sequence ASG. S144 is modified (2,3-didehydroalanine (Ser)).

Belongs to the PAL/histidase family. Contains an active site 4-methylidene-imidazol-5-one (MIO), which is formed autocatalytically by cyclization and dehydration of residues Ala-Ser-Gly.

Its subcellular location is the cytoplasm. It catalyses the reaction L-histidine = trans-urocanate + NH4(+). It participates in amino-acid degradation; L-histidine degradation into L-glutamate; N-formimidoyl-L-glutamate from L-histidine: step 1/3. This chain is Histidine ammonia-lyase, found in Shewanella pealeana (strain ATCC 700345 / ANG-SQ1).